Here is a 343-residue protein sequence, read N- to C-terminus: GTPase Obg (343 aa).

The Obg domain maps to 1-159; sequence MKFLDQAKIY…RWVWLRLKLI (159 aa). Residues 160-328 enclose the OBG-type G domain; it reads ADAGLVGLPN…LLRQVMTYVA (169 aa). Residues 166–173, 191–195, 213–216, 280–283, and 309–311 contribute to the GTP site; these read GLPNAGKS, FTTLH, DIPG, NKCD, and SGV. 2 residues coordinate Mg(2+): S173 and T193.

Belongs to the TRAFAC class OBG-HflX-like GTPase superfamily. OBG GTPase family. As to quaternary structure, monomer. Mg(2+) is required as a cofactor.

Its subcellular location is the cytoplasm. An essential GTPase which binds GTP, GDP and possibly (p)ppGpp with moderate affinity, with high nucleotide exchange rates and a fairly low GTP hydrolysis rate. Plays a role in control of the cell cycle, stress response, ribosome biogenesis and in those bacteria that undergo differentiation, in morphogenesis control. In Granulibacter bethesdensis (strain ATCC BAA-1260 / CGDNIH1), this protein is GTPase Obg.